The sequence spans 348 residues: UPF0283 membrane protein HAPS_0079 (348 aa).

A run of 3 helical transmembrane segments spans residues 57–77 (FLAA…QWLI), 86–106 (IYFA…GAII), and 203–223 (ENAI…MVAW).

Belongs to the UPF0283 family.

Its subcellular location is the cell inner membrane. In Glaesserella parasuis serovar 5 (strain SH0165) (Haemophilus parasuis), this protein is UPF0283 membrane protein HAPS_0079.